We begin with the raw amino-acid sequence, 263 residues long: Putative hydro-lyase Pden_0321 (263 aa).

Belongs to the D-glutamate cyclase family.

The sequence is that of Putative hydro-lyase Pden_0321 from Paracoccus denitrificans (strain Pd 1222).